The primary structure comprises 138 residues: Basic phospholipase A2 Sct-N6 (138 aa).

A signal peptide spans 1-16; it reads MRTFWIVAVLLVGVEG. 7 disulfides stabilise this stretch: C42-C131, C44-C60, C59-C111, C65-C138, C66-C104, C73-C97, and C91-C102. Y43, G45, and G47 together coordinate Ca(2+). H63 is a catalytic residue. D64 is a binding site for Ca(2+). Residue D105 is part of the active site.

The protein belongs to the phospholipase A2 family. Group II subfamily. D49 sub-subfamily. The cofactor is Ca(2+). In terms of tissue distribution, expressed by the venom gland.

It localises to the secreted. The enzyme catalyses a 1,2-diacyl-sn-glycero-3-phosphocholine + H2O = a 1-acyl-sn-glycero-3-phosphocholine + a fatty acid + H(+). Functionally, snake venom phospholipase A2 (PLA2) that displays edema-inducing activities, as well as presynaptic neurotoxicity and low myotoxicity. PLA2 catalyzes the calcium-dependent hydrolysis of the 2-acyl groups in 3-sn-phosphoglycerides. The chain is Basic phospholipase A2 Sct-N6 from Sistrurus tergeminus (Western massasauga).